The sequence spans 503 residues: Aromatase (503 aa).

Residues 21 to 41 form a helical membrane-spanning segment; the sequence is VTVSAMPLLLIMGLLLLIWNC. Residues aspartate 309 and methionine 374 each coordinate substrate. Residue cysteine 437 participates in heme binding.

This sequence belongs to the cytochrome P450 family. It depends on heme as a cofactor.

The protein localises to the endoplasmic reticulum membrane. It localises to the microsome membrane. The enzyme catalyses testosterone + 3 reduced [NADPH--hemoprotein reductase] + 3 O2 = 17beta-estradiol + formate + 3 oxidized [NADPH--hemoprotein reductase] + 4 H2O + 4 H(+). It carries out the reaction androst-4-ene-3,17-dione + 3 reduced [NADPH--hemoprotein reductase] + 3 O2 = estrone + formate + 3 oxidized [NADPH--hemoprotein reductase] + 4 H2O + 4 H(+). It catalyses the reaction androst-4-ene-3,17-dione + reduced [NADPH--hemoprotein reductase] + O2 = 19-hydroxyandrost-4-ene-3,17-dione + oxidized [NADPH--hemoprotein reductase] + H2O + H(+). The catalysed reaction is 19-hydroxyandrost-4-ene-3,17-dione + reduced [NADPH--hemoprotein reductase] + O2 = 19-oxo-androst-4-ene-3,17-dione + oxidized [NADPH--hemoprotein reductase] + 2 H2O + H(+). The enzyme catalyses 19-oxo-androst-4-ene-3,17-dione + reduced [NADPH--hemoprotein reductase] + O2 = estrone + formate + oxidized [NADPH--hemoprotein reductase] + H2O + 2 H(+). It carries out the reaction estrone + reduced [NADPH--hemoprotein reductase] + O2 = 2-hydroxyestrone + oxidized [NADPH--hemoprotein reductase] + H2O + H(+). It catalyses the reaction 17beta-hydroxy-5alpha-androstan-3-one + reduced [NADPH--hemoprotein reductase] + O2 = 17beta,19-dihydroxy-3-oxo-5alpha-androstanone + oxidized [NADPH--hemoprotein reductase] + H2O + H(+). The catalysed reaction is 17beta,19-dihydroxy-3-oxo-5alpha-androstanone + reduced [NADPH--hemoprotein reductase] + O2 = 17beta-hydroxy-3,19-dioxo-5alpha-androstanone + oxidized [NADPH--hemoprotein reductase] + 2 H2O + H(+). The enzyme catalyses 17beta-hydroxy-3,19-dioxo-5alpha-androstanone + reduced [NADPH--hemoprotein reductase] + O2 = 17beta-hydroxy-3-oxo-19-nor-5alpha-androst-1-ene + formate + oxidized [NADPH--hemoprotein reductase] + H2O + 2 H(+). It participates in steroid hormone biosynthesis. In terms of biological role, a cytochrome P450 monooxygenase that catalyzes the conversion of C19 androgens, androst-4-ene-3,17-dione (androstenedione) and testosterone to the C18 estrogens, estrone and estradiol, respectively. Catalyzes three successive oxidations of C19 androgens: two conventional oxidations at C19 yielding 19-hydroxy and 19-oxo/19-aldehyde derivatives, followed by a third oxidative aromatization step that involves C1-beta hydrogen abstraction combined with cleavage of the C10-C19 bond to yield a phenolic A ring and formic acid. Alternatively, the third oxidative reaction yields a 19-norsteroid and formic acid. Converts dihydrotestosterone to delta1,10-dehydro 19-nordihydrotestosterone and may play a role in homeostasis of this potent androgen. Also displays 2-hydroxylase activity toward estrone. Mechanistically, uses molecular oxygen inserting one oxygen atom into a substrate, and reducing the second into a water molecule, with two electrons provided by NADPH via cytochrome P450 reductase (CPR; NADPH-ferrihemoprotein reductase). The sequence is that of Aromatase (Cyp19a1) from Mus musculus (Mouse).